The following is a 154-amino-acid chain: Probable chemoreceptor glutamine deamidase CheD (154 aa).

The protein belongs to the CheD family.

The enzyme catalyses L-glutaminyl-[protein] + H2O = L-glutamyl-[protein] + NH4(+). Its function is as follows. Probably deamidates glutamine residues to glutamate on methyl-accepting chemotaxis receptors (MCPs), playing an important role in chemotaxis. The polypeptide is Probable chemoreceptor glutamine deamidase CheD (Methanococcus maripaludis (strain C6 / ATCC BAA-1332)).